A 380-amino-acid chain; its full sequence is Gap junction gamma-1 protein (380 aa).

The Cytoplasmic portion of the chain corresponds to Met-1–Lys-22. A helical membrane pass occupies residues Ile-23–Tyr-45. The Extracellular segment spans residues Asp-46–Arg-75. Residues Phe-76–Ala-95 traverse the membrane as a helical segment. Topologically, residues Met-96–Lys-171 are cytoplasmic. Residues Val-172–Leu-194 form a helical membrane-spanning segment. The Extracellular portion of the chain corresponds to Tyr-195 to Leu-228. Residues Leu-229–Leu-251 traverse the membrane as a helical segment. The Cytoplasmic portion of the chain corresponds to Ser-252–Ala-380. The interval Ala-337 to Ala-380 is disordered. The span at Glu-342–Ser-353 shows a compositional bias: low complexity. Residues Asn-354 to Lys-369 show a composition bias toward polar residues. Basic and acidic residues predominate over residues Gln-370–Ala-380.

Belongs to the connexin family. Gamma-type subfamily. In terms of assembly, a connexon is composed of a hexamer of connexins.

It is found in the cell membrane. The protein resides in the cell junction. It localises to the gap junction. In terms of biological role, one gap junction consists of a cluster of closely packed pairs of transmembrane channels, the connexons, through which materials of low MW diffuse from one cell to a neighboring cell. Participates in a developmental pathway for formation of the notochord and tail. The sequence is that of Gap junction gamma-1 protein (gjc1) from Danio rerio (Zebrafish).